The sequence spans 186 residues: Negative modulator of initiation of replication (186 aa).

This sequence belongs to the SeqA family. Homodimer. Polymerizes to form helical filaments.

The protein localises to the cytoplasm. Negative regulator of replication initiation, which contributes to regulation of DNA replication and ensures that replication initiation occurs exactly once per chromosome per cell cycle. Binds to pairs of hemimethylated GATC sequences in the oriC region, thus preventing assembly of replication proteins and re-initiation at newly replicated origins. Repression is relieved when the region becomes fully methylated. The protein is Negative modulator of initiation of replication of Glaesserella parasuis serovar 5 (strain SH0165) (Haemophilus parasuis).